The following is a 419-amino-acid chain: Dual specificity protein phosphatase 7 (419 aa).

Residues 1 to 41 are disordered; sequence MKNQLRGPPVRAHMSTSGAAAAGGTRAGSEPGAGSGSSAGI. The segment covering 15-30 has biased composition (low complexity); that stretch reads STSGAAAAGGTRAGSE. Residues 31–41 show a composition bias toward gly residues; that stretch reads PGAGSGSSAGI. Residues 68-187 form the Rhodanese domain; it reads GGASLLLLDC…FQTEYSEHCE (120 aa). The disordered stretch occupies residues 216–240; it reads CSDGESDRELPSSATESDGSPVPSS. The span at 227–240 shows a compositional bias: polar residues; that stretch reads SSATESDGSPVPSS. In terms of domain architecture, Tyrosine-protein phosphatase spans 244–387; that stretch reads FPVQILPYLY…LLDFERTLGL (144 aa). C331 (phosphocysteine intermediate) is an active-site residue. 331-337 lines the substrate pocket; the sequence is CLAGISR.

It belongs to the protein-tyrosine phosphatase family. Non-receptor class dual specificity subfamily. Interacts with MAPK1/ERK2; the interaction enhances DUSP7 phosphatase activity.

It localises to the cytoplasm. It carries out the reaction O-phospho-L-tyrosyl-[protein] + H2O = L-tyrosyl-[protein] + phosphate. The catalysed reaction is O-phospho-L-seryl-[protein] + H2O = L-seryl-[protein] + phosphate. It catalyses the reaction O-phospho-L-threonyl-[protein] + H2O = L-threonyl-[protein] + phosphate. With respect to regulation, strongly inhibited by sodium orthovanadate. In terms of biological role, dual specificity protein phosphatase. Shows high activity towards MAPK1/ERK2. Also has lower activity towards MAPK14 and MAPK8. In arrested oocytes, plays a role in meiotic resumption. Promotes nuclear envelope breakdown and activation of the CDK1/Cyclin-B complex in oocytes, probably by dephosphorylating and inactivating the conventional protein kinase C (cPKC) isozyme PRKCB. May also inactivate PRKCA and/or PRKCG. Also important in oocytes for normal chromosome alignment on the metaphase plate and progression to anaphase, where it might regulate activity of the spindle-assembly checkpoint (SAC) complex. The polypeptide is Dual specificity protein phosphatase 7 (Rattus norvegicus (Rat)).